A 290-amino-acid polypeptide reads, in one-letter code: 2-phosphoglycerate kinase (290 aa).

The region spanning 1–89 (MIIVTDSERK…FWRELRRRKV (89 aa)) is the ATP-cone domain.

The protein belongs to the 2-phosphoglycerate kinase family. The cofactor is a divalent metal cation.

It carries out the reaction (2R)-2-phosphoglycerate + ATP = (2R)-2,3-bisphosphoglycerate + ADP + H(+). It participates in thermoadapter biosynthesis; cyclic 2,3-diphosphoglycerate biosynthesis; cyclic 2,3-diphosphoglycerate from 2-phospho-D-glycerate: step 1/2. Catalyzes the phosphorylation of 2-phosphoglycerate to 2,3-diphosphoglycerate. Involved in the biosynthesis of cyclic 2,3-bisphosphoglycerate, a thermoprotectant. The sequence is that of 2-phosphoglycerate kinase from Thermococcus kodakarensis (strain ATCC BAA-918 / JCM 12380 / KOD1) (Pyrococcus kodakaraensis (strain KOD1)).